We begin with the raw amino-acid sequence, 1756 residues long: Multifunctional conjugation protein TraI (1756 aa).

The DNA relaxase stretch occupies residues 1 to 330 (MMSIAQVRSA…TQAIAGLSER (330 aa)). Catalysis depends on Tyr-16, which acts as the O-(5'-phospho-DNA)-tyrosine intermediate; for relaxase activity. Tyr-17 acts as the Relaxase in catalysis. Mg(2+)-binding residues include His-146, His-157, and His-159. The segment at 950-1500 (GKEAVMPLME…LRDVAAGRAV (551 aa)) is DNA helicase I. Residue 992–999 (GYAGVGKT) participates in ATP binding. Residues 1534–1756 (RNGKSAGIWL…LQKEKTLGGD (223 aa)) form a required for DNA transfer, may interact with TraM region. Residues 1717–1753 (QRVREAVREIARENLLQERLQQMERDMVRDLQKEKTL) adopt a coiled-coil conformation.

To TraI of plasmid IncFII R100. As to quaternary structure, monomer. Part of the relaxosome, a complex composed of plasmid-encodes TraI, TraM, TraY and host-encoded IHF bound to the F plasmid origin of transfer (oriT). Directly contacts coupling protein TraD. Seems to directly contact TraM via its C-terminus. Mg(2+) is required as a cofactor.

Its subcellular location is the cytoplasm. The catalysed reaction is ATP-independent breakage of single-stranded DNA, followed by passage and rejoining.. It carries out the reaction ATP + H2O = ADP + phosphate + H(+). Its activity is regulated as follows. Nicking activity (relaxase) is inhibited by bisphosphonates such as the non-competitive inhibitor imidobisphosphate (PNP), etidronic acid (ETIDRO) and clodronic acid (CLODRO). The latter 2 are competitive inhibitors, and are already used clinically to treat bone loss (marketed as Didronel and Bonefos). All 3 compounds also inhibit conjugation and kill F plasmid-containing cells. They are specific to dual tyrosine relaxases such as those found in F and related R conjugative plasmids. Its function is as follows. Conjugative DNA transfer (CDT) is the unidirectional transfer of ssDNA plasmid from a donor to a recipient cell. It is the central mechanism by which antibiotic resistance and virulence factors are propagated in bacterial populations. Part of the relaxosome, which facilitates a site- and strand-specific cut in the origin of transfer by TraI, at the nic site. Relaxosome formation requires binding of IHF and TraY to the oriT region, which then facilitates binding of TraI relaxase. TraI forms a covalent 5'-phosphotyrosine intermediate linkage to the ssDNA. The transesterified T-strand moves from the donor cell to the recipient cell in a 5'to 3' direction, with the DNA helicase activity of TraI unwinding the DNA. DNA transfer occurs via the conjugative pore (transferosome) an intercellular junction mediated by a type IV secretion system, with TraD providing the means to link the relaxosome to the conjugative pore. The relaxase completes DNA transfer by reversing the covalent phosphotyrosine linkage and releasing the T-strand. TraI has also been identified as DNA helicase I. DNA. helicase I is a potent, highly processive DNA-dependent ATPase, able to unwind about 1.1 kb dsDNA per second in a 5' to 3' manner. The sequence is that of Multifunctional conjugation protein TraI (traI) from Escherichia coli (strain K12).